Consider the following 181-residue polypeptide: 6,7-dimethyl-8-ribityllumazine synthase (181 aa).

5-amino-6-(D-ribitylamino)uracil-binding positions include Phe24, 62-64 (SFE), and 86-88 (AII). 91 to 92 (QT) is a binding site for (2S)-2-hydroxy-3-oxobutyl phosphate. His94 functions as the Proton donor in the catalytic mechanism. Phe119 contacts 5-amino-6-(D-ribitylamino)uracil. Arg133 provides a ligand contact to (2S)-2-hydroxy-3-oxobutyl phosphate.

This sequence belongs to the DMRL synthase family.

The catalysed reaction is (2S)-2-hydroxy-3-oxobutyl phosphate + 5-amino-6-(D-ribitylamino)uracil = 6,7-dimethyl-8-(1-D-ribityl)lumazine + phosphate + 2 H2O + H(+). It participates in cofactor biosynthesis; riboflavin biosynthesis; riboflavin from 2-hydroxy-3-oxobutyl phosphate and 5-amino-6-(D-ribitylamino)uracil: step 1/2. Its function is as follows. Catalyzes the formation of 6,7-dimethyl-8-ribityllumazine by condensation of 5-amino-6-(D-ribitylamino)uracil with 3,4-dihydroxy-2-butanone 4-phosphate. This is the penultimate step in the biosynthesis of riboflavin. The polypeptide is 6,7-dimethyl-8-ribityllumazine synthase (Microcystis aeruginosa (strain NIES-843 / IAM M-2473)).